Consider the following 336-residue polypeptide: Dihydroorotate dehydrogenase (quinone) (336 aa).

Residues 62-66 (AGLDK) and T86 each bind FMN. K66 is a substrate binding site. 111–115 (NRMGF) serves as a coordination point for substrate. FMN is bound by residues N139 and N172. N172 lines the substrate pocket. S175 serves as the catalytic Nucleophile. N177 contacts substrate. The FMN site is built by K217 and T245. 246-247 (NT) is a binding site for substrate. Residues G268, G297, and 318–319 (YT) each bind FMN.

It belongs to the dihydroorotate dehydrogenase family. Type 2 subfamily. Monomer. Requires FMN as cofactor.

It localises to the cell membrane. It carries out the reaction (S)-dihydroorotate + a quinone = orotate + a quinol. The protein operates within pyrimidine metabolism; UMP biosynthesis via de novo pathway; orotate from (S)-dihydroorotate (quinone route): step 1/1. Its function is as follows. Catalyzes the conversion of dihydroorotate to orotate with quinone as electron acceptor. The polypeptide is Dihydroorotate dehydrogenase (quinone) (Vibrio parahaemolyticus serotype O3:K6 (strain RIMD 2210633)).